The sequence spans 1210 residues: ATPase family AAA domain-containing protein At1g05910 (1210 aa).

Positions 1 to 11 (MHPKRSSQGDG) are enriched in polar residues. Disordered stretches follow at residues 1-32 (MHPK…LHGR) and 63-291 (LHKG…RTDD). The span at 97–109 (DYTDSSGAEDEDM) shows a compositional bias: acidic residues. Basic and acidic residues predominate over residues 130 to 146 (SRKDMDAELAPRREGLR). Over residues 167–226 (DTSEEKDGQDETENGNELDDADDGENEVEAEDEGNGEDEGDGEDEGEEDGDDDEEGDEEQ) the composition is skewed to acidic residues. Residues 227 to 244 (EGRKRYDLRNRAEVRRMP) show a composition bias toward basic and acidic residues. Positions 276 to 286 (GGSRPHKRHRF) are enriched in basic residues. 422-429 (GPPGTGKT) is a binding site for ATP. The disordered stretch occupies residues 856-883 (LNGKPDGPQPLPELPKVPKEPTGPKPAE). In terms of domain architecture, Bromo spans 897-1000 (RLRMCLRDVC…DVVHGMLSQM (104 aa)). Positions 1057–1070 (DRDYEGLKKPKKTT) are enriched in basic and acidic residues. Positions 1057 to 1151 (DRDYEGLKKP…EISSRTESVK (95 aa)) are disordered. Positions 1080 to 1090 (DKSQNQDSGQE) are enriched in polar residues. 2 stretches are compositionally biased toward basic and acidic residues: residues 1108-1123 (DGDR…KEAS) and 1138-1151 (KSDK…ESVK).

The protein belongs to the AAA ATPase family.

The protein is ATPase family AAA domain-containing protein At1g05910 of Arabidopsis thaliana (Mouse-ear cress).